A 551-amino-acid polypeptide reads, in one-letter code: Glucans biosynthesis protein D (551 aa).

The segment at residues 1–32 (MNRRRFIKGSMAMAAVCGSSGIASLFSQAAFA) is a signal peptide (tat-type signal).

Belongs to the OpgD/OpgG family. Post-translationally, predicted to be exported by the Tat system. The position of the signal peptide cleavage has not been experimentally proven.

The protein resides in the periplasm. Its pathway is glycan metabolism; osmoregulated periplasmic glucan (OPG) biosynthesis. Its function is as follows. Probably involved in the control of the structural glucose backbone of osmoregulated periplasmic glucans (OPGs). This Salmonella typhimurium (strain LT2 / SGSC1412 / ATCC 700720) protein is Glucans biosynthesis protein D (mdoD).